Consider the following 1663-residue polypeptide: Cortactin-binding protein 2 (1663 aa).

Disordered regions lie at residues 1-23, 203-222, 352-440, 454-478, and 498-616; these read MATD…AGAA, KKKT…RSTE, ARPG…LHPG, GNAN…SPTS, and RFTS…PKPS. Residues 119 to 276 adopt a coiled-coil conformation; it reads KKMQERMSAQ…EQLKRGSDSK (158 aa). Over residues 384 to 396 the composition is skewed to low complexity; it reads NGPSTGSTPDPTS. A compositionally biased stretch (polar residues) spans 411–422; that stretch reads QTPGIAPQNSQA. R498 bears the Asymmetric dimethylarginine mark. The segment covering 583–593 has biased composition (polar residues); the sequence is TVASPPSSLPQ. ANK repeat units follow at residues 709–739, 743–772, 776–805, 809–838, and 842–871; these read GRPT…DINY, DGHS…QVNA, NGFT…NINH, GGQT…NRSV, and DGWT…LARG. The interval 876–897 is disordered; it reads EEGSESSVFDLDGGEESPEGIS. The ANK 6 repeat unit spans residues 912–942; the sequence is EGWTAAHIAASKGFKNCLEILCRHGGLEPER. A disordered region spans residues 1446-1485; that stretch reads NKKKGESGAWRKVNTSPRRKSGRFSLPTWNKPDLSTEGMK. A Phosphoserine modification is found at S1524. 2 disordered regions span residues 1580-1602 and 1615-1663; these read SQKE…KSKT and VPRS…KPNK. Positions 1582-1599 are enriched in polar residues; it reads KEVSPLSSHQTTECSNSK. Residues 1624–1638 show a composition bias toward low complexity; the sequence is SQNTKRSSSSSNTRQ. The segment covering 1645-1663 has biased composition (basic and acidic residues); it reads SKEENWNLHKNEHLEKPNK.

As to quaternary structure, interacts with CTTN/cortactin SH3 domain. Interacts with STRN, STRN4/zinedin and MOB4/phocein; this interactions mediate the association with the STRIPAK core complex and may regulate dendritic spine distribution of the STRIPAK complex in hippocampal neurons. Activation of glutamate receptors weakens the interaction with STRN and STRN4.

It localises to the cytoplasm. The protein resides in the cell cortex. It is found in the cell projection. Its subcellular location is the dendritic spine. Regulates the dendritic spine distribution of CTTN/cortactin in hippocampal neurons, and thus controls dendritic spinogenesis and dendritic spine maintenance. Associates with the striatin-interacting phosphatase and kinase (STRIPAK) core complex to regulate dendritic spine distribution of the STRIPAK complex in hippocampal neurons. The protein is Cortactin-binding protein 2 (CTTNBP2) of Nomascus leucogenys (Northern white-cheeked gibbon).